Here is a 153-residue protein sequence, read N- to C-terminus: MNKELRAKTNEELIQLVTQLKGRLLEYRFKLAQGELDKTHIIKETRQTLARVLTILTERDVKVNVNAMVSSFVKEQTKQKEIQESVKKIKQLRVAKLKQNKEKRLANAEKVKAAPKPEQKTKKVKKAPKKTETVKPTTNKNKKNVKAKTKKKG.

The large ribosomal subunit protein uL29 stretch occupies residues 1–83 (MNKELRAKTN…KEQTKQKEIQ (83 aa)). Residues 84-153 (ESVKKIKQLR…NVKAKTKKKG (70 aa)) form a unknown region. Basic and acidic residues predominate over residues 100–121 (NKEKRLANAEKVKAAPKPEQKT). Residues 100 to 153 (NKEKRLANAEKVKAAPKPEQKTKKVKKAPKKTETVKPTTNKNKKNVKAKTKKKG) form a disordered region. Positions 140–153 (KNKKNVKAKTKKKG) are enriched in basic residues.

The protein belongs to the universal ribosomal protein uL29 family.

The polypeptide is Large ribosomal subunit protein uL29 (Mycoplasmoides gallisepticum (strain R(low / passage 15 / clone 2)) (Mycoplasma gallisepticum)).